The following is an 890-amino-acid chain: Agglutinin-like protein ARB_02240 (890 aa).

The first 20 residues, M1–A20, serve as a signal peptide directing secretion. 4 N-linked (GlcNAc...) asparagine glycosylation sites follow: N106, N217, N583, and N654. Residues I680–T872 are disordered. 2 stretches are compositionally biased toward low complexity: residues T693 to S753 and T760 to T790. Residues G791–P802 show a composition bias toward polar residues. Low complexity-rich tracts occupy residues S803–T812 and S821–T837. Gly residues predominate over residues T838 to T848. A lipid anchor (GPI-anchor amidated glycine) is attached at G864. Positions A865–I890 are cleaved as a propeptide — removed in mature form.

The protein belongs to the ALS family. Post-translationally, the GPI-anchor is attached to the protein in the endoplasmic reticulum and serves to target the protein to the cell surface. There, the glucosamine-inositol phospholipid moiety is cleaved off and the GPI-modified mannoprotein is covalently attached via its lipidless GPI glycan remnant to the 1,6-beta-glucan of the outer cell wall layer.

Its subcellular location is the secreted. It localises to the cell membrane. It is found in the cell wall. In terms of biological role, cell surface adhesion protein which mediates cell agglutination and host tissue adherence. The polypeptide is Agglutinin-like protein ARB_02240 (Arthroderma benhamiae (strain ATCC MYA-4681 / CBS 112371) (Trichophyton mentagrophytes)).